Here is a 468-residue protein sequence, read N- to C-terminus: Bifunctional protein HldE (468 aa).

The interval 1–315 (MAKKVEILVV…ELLRSRANAE (315 aa)) is ribokinase. An ATP-binding site is contributed by 192–195 (NRKE). Residue Asp-260 is part of the active site. A cytidylyltransferase region spans residues 340-468 (FTNGCFDILH…IVKRIKDADK (129 aa)).

This sequence in the N-terminal section; belongs to the carbohydrate kinase PfkB family. It in the C-terminal section; belongs to the cytidylyltransferase family. In terms of assembly, homodimer.

The catalysed reaction is D-glycero-beta-D-manno-heptose 7-phosphate + ATP = D-glycero-beta-D-manno-heptose 1,7-bisphosphate + ADP + H(+). It carries out the reaction D-glycero-beta-D-manno-heptose 1-phosphate + ATP + H(+) = ADP-D-glycero-beta-D-manno-heptose + diphosphate. It functions in the pathway nucleotide-sugar biosynthesis; ADP-L-glycero-beta-D-manno-heptose biosynthesis; ADP-L-glycero-beta-D-manno-heptose from D-glycero-beta-D-manno-heptose 7-phosphate: step 1/4. The protein operates within nucleotide-sugar biosynthesis; ADP-L-glycero-beta-D-manno-heptose biosynthesis; ADP-L-glycero-beta-D-manno-heptose from D-glycero-beta-D-manno-heptose 7-phosphate: step 3/4. Functionally, catalyzes the phosphorylation of D-glycero-D-manno-heptose 7-phosphate at the C-1 position to selectively form D-glycero-beta-D-manno-heptose-1,7-bisphosphate. Catalyzes the ADP transfer from ATP to D-glycero-beta-D-manno-heptose 1-phosphate, yielding ADP-D-glycero-beta-D-manno-heptose. This chain is Bifunctional protein HldE, found in Campylobacter curvus (strain 525.92).